The following is a 258-amino-acid chain: 2-oxo-tetronate isomerase (258 aa).

E143 acts as the Proton donor/acceptor in catalysis. The Mg(2+) site is built by E143, D178, Q204, and E240. E240 serves as the catalytic Proton donor/acceptor.

It belongs to the hyi family. OtnI subfamily.

It carries out the reaction 2-dehydro-L-erythronate = 3-dehydro-L-erythronate. It catalyses the reaction 2-dehydro-D-erythronate = 3-dehydro-D-erythronate. In terms of biological role, catalyzes the isomerization of 2-oxo-tetronate to 3-oxo-tetronate. This Haemophilus influenzae (strain ATCC 51907 / DSM 11121 / KW20 / Rd) protein is 2-oxo-tetronate isomerase.